A 160-amino-acid polypeptide reads, in one-letter code: MSRRRRANKRVITPDSKYNSVLLARFINVIMRSGERSIAEKIVYGALSKAENRIGESAMSVFSSALNNVMPQMEVRSRRIGGVTYQVPVEVKEDRSVSLALRWISRAAATARKRSNKMYMDCLCNELLEAYNKRGGAYKIREEKYKMAEANKAFSHFRFN.

It belongs to the universal ribosomal protein uS7 family. As to quaternary structure, part of the 30S ribosomal subunit. Contacts proteins S9 and S11.

Functionally, one of the primary rRNA binding proteins, it binds directly to 16S rRNA where it nucleates assembly of the head domain of the 30S subunit. Is located at the subunit interface close to the decoding center, probably blocks exit of the E-site tRNA. The protein is Small ribosomal subunit protein uS7 of Ehrlichia ruminantium (strain Gardel).